Consider the following 301-residue polypeptide: Bifunctional protein FolD (301 aa).

NADP(+)-binding positions include 164-166 (GRS), Ser-191, and Ile-232.

Belongs to the tetrahydrofolate dehydrogenase/cyclohydrolase family. Homodimer.

The catalysed reaction is (6R)-5,10-methylene-5,6,7,8-tetrahydrofolate + NADP(+) = (6R)-5,10-methenyltetrahydrofolate + NADPH. It catalyses the reaction (6R)-5,10-methenyltetrahydrofolate + H2O = (6R)-10-formyltetrahydrofolate + H(+). It participates in one-carbon metabolism; tetrahydrofolate interconversion. In terms of biological role, catalyzes the oxidation of 5,10-methylenetetrahydrofolate to 5,10-methenyltetrahydrofolate and then the hydrolysis of 5,10-methenyltetrahydrofolate to 10-formyltetrahydrofolate. In Borrelia garinii subsp. bavariensis (strain ATCC BAA-2496 / DSM 23469 / PBi) (Borreliella bavariensis), this protein is Bifunctional protein FolD.